The primary structure comprises 179 residues: Optic atrophy 3 protein (179 aa).

A coiled-coil region spans residues 103–163 (RHQAQQRHKE…TELQEVRAQL (61 aa)).

It belongs to the OPA3 family. In terms of tissue distribution, ubiquitous. Most prominent expression in skeletal muscle and kidney.

It localises to the mitochondrion. In terms of biological role, may play some role in mitochondrial processes. The protein is Optic atrophy 3 protein (OPA3) of Homo sapiens (Human).